Reading from the N-terminus, the 650-residue chain is MRGGGFGDRDRDRDRGGFGARGGSGLPPKKFGNPGERLRKKKWDLSELPKFEKNFYVEHPEVARLTPYEVDELRRKKEITVRGGDVCPKPVFAFHHANFPQYVMDVLMDQHFTEPTPIQCQGFPLALSGRDMVGIAQTGSGKTLAYLLPAIVHINHQPYLERGDGPICLVLAPTRELAQQVQQVADDYGKCSRLKSTCIYGGAPKGPQIRDLERGVEICIATPGRLIDFLESGKTNLRRCTYLVLDEADRMLDMGFEPQIRKIVDQIRPDRQTLMWSATWPKEVRQLAEDFLRDYTQINVGNLELSANHNILQIVDVCMESEKDHKLIQLMEEIMAEKENKTIIFVETKRRCDDLTRRMRRDGWPAMCIHGDKSQPERDWVLNEFRSGKAPILIATDVASRGLDVEDVKFVINYDYPNSSEDYVHRIGRTARSTNKGTAYTFFTPGNLKQARELIKVLEEANQAINPKLMQLVDHRGGGGGGGGRSRYRTTSSANNPNLMYQDECDRRLRGVKDGGRRDSTSYRDRSETDRASYANGSGYGSPNSAFGAQAGQYTYAQGTYGAAAYGTSGYTAQEYAAGTYGASSTASAGRSSQSSSQQFSGIGRSGQQPQPLMSQQFAQPPGATNMIGYMGQTAYQYPPPPPPPPPSRK.

Residues 1 to 38 (MRGGGFGDRDRDRDRGGFGARGGSGLPPKKFGNPGERL) are disordered. Residues 7 to 16 (GDRDRDRDRG) are compositionally biased toward basic and acidic residues. Residues K29, K30, and K42 each carry the N6-acetyllysine modification. A Glycyl lysine isopeptide (Lys-Gly) (interchain with G-Cter in SUMO); alternate cross-link involves residue K50. K50 participates in a covalent cross-link: Glycyl lysine isopeptide (Lys-Gly) (interchain with G-Cter in SUMO1); alternate. K50 is covalently cross-linked (Glycyl lysine isopeptide (Lys-Gly) (interchain with G-Cter in SUMO2); alternate). The Q motif motif lies at 92–120 (FAFHHANFPQYVMDVLMDQHFTEPTPIQC). The region spanning 123–298 (FPLALSGRDM…EDFLRDYTQI (176 aa)) is the Helicase ATP-binding domain. 136-143 (AQTGSGKT) is an ATP binding site. The DEAD box motif lies at 246 to 249 (DEAD). One can recognise a Helicase C-terminal domain in the interval 326-473 (KLIQLMEEIM…AINPKLMQLV (148 aa)). A Phosphothreonine modification is found at T444. K449 is covalently cross-linked (Glycyl lysine isopeptide (Lys-Gly) (interchain with G-Cter in SUMO2)). Residues 468 to 650 (KLMQLVDHRG…PPPPPPPSRK (183 aa)) are transactivation domain. Disordered regions lie at residues 472–543 (LVDH…YGSP) and 583–650 (ASST…PSRK). The segment covering 489–499 (RTTSSANNPNL) has biased composition (polar residues). Residues 504 to 531 (ECDRRLRGVKDGGRRDSTSYRDRSETDR) show a composition bias toward basic and acidic residues. The span at 583 to 609 (ASSTASAGRSSQSSSQQFSGIGRSGQQ) shows a compositional bias: low complexity. At R605 the chain carries Omega-N-methylarginine. Positions 610 to 619 (PQPLMSQQFA) are enriched in polar residues. The span at 638 to 650 (YPPPPPPPPPSRK) shows a compositional bias: pro residues. The interval 639-647 (PPPPPPPPP) is interaction with YAP1.

It belongs to the DEAD box helicase family. DDX5/DBP2 subfamily. In terms of assembly, interacts with DDX5 in an RNA-independent manner. Interacts with CDK9 transcription elongation complex under basal conditions. Following cell stimulation with poly(I:C), a synthetic double-stranded RNA mimicking viral infection, the interaction with CDK9 is decreased. Interacts with ESR1 in an estrogen-independent manner. Interacts with HNRNPH1; this interaction is important for the regulation of alternative splicing on G-quadruplex structures. At high, but not low, cell density, interacts with DROSHA and DGCR8, the core components of the microprocessor complex involved in the maturation of primary microRNAs (pri-miRNAs) into pre-miRNAs. The interaction with DGCR8 is reduced during mitosis. At low, but not high, cell density, interacts with YAP1 and with its paralog, WWTR1/TAZ. Interactions with DROSHA and YAP1 are mutually exclusive. In vitro, the pre-miRNA processing activity of the DDX17-containing microprocessor complex is weaker than that of the DROSHA/DGCR8 microprocessor complex. Interacts with UPF3B. Interacts with NFAT5; this interaction leads to DDX17 recruitment to LNC2 and S100A4 promoters and NFAT5-mediated DDX17-enhanced transactivation. Interacts with HDAC1, HDAC2 and HDAC3; this interaction with HDAC1 and HDAC3, but not HDAC2, depends upon DDX17 acetylation. Interacts with ZC3HAV1 (via N-terminal domain) in an RNA-independent manner. Interacts with EXOSC3/RRP40 and EXOSC5/RRP46; this interaction may be indirect and mediated by ZC3HAV1-binding. Interacts with EP300; this interaction leads to acetylation at lysine residues. Interacts with CREBBP/CBP and KAT2B/P/CAF. Directly interacts with CTNNB1. Interacts with MYOD1. Interacts with TP53. Interacts with DCP1A in an RNA-independent manner. Interacts with DCP2 in an RNA-dependent manner. Interacts with DHX36; this interaction occurs in a RNA-dependent manner. Interacts with ERCC6. In terms of processing, sumoylation significantly increases stability. It also promotes interaction specifically with HDAC1 (but not HDAC2, nor HDAC3) and strongly stimulates ESR1 and TP53 coactivation. Post-translationally, acetylation at lysine residues stabilizes the protein, stimulates interaction with HDAC1 and HDAC3, but not HDAC2, and represses ESR1 and TP53 coactivation activity.

It is found in the nucleus. The protein localises to the nucleolus. Its subcellular location is the cytoplasm. The protein resides in the cytosol. The catalysed reaction is ATP + H2O = ADP + phosphate + H(+). Functionally, as an RNA helicase, unwinds RNA and alters RNA structures through ATP binding and hydrolysis. Involved in multiple cellular processes, including pre-mRNA splicing, alternative splicing, ribosomal RNA processing and miRNA processing, as well as transcription regulation. Regulates the alternative splicing of exons exhibiting specific features. This function requires the RNA helicase activity. Affects NFAT5 and histone macro-H2A.1/MACROH2A1 alternative splicing in a CDK9-dependent manner. Affects splicing of mediators of steroid hormone signaling pathway, including kinases that phosphorylates ESR1 and transcriptional regulators. By acting splicing of regulatory factors, participates in ESR1 and AR stabilization. Promotes the inclusion of specific AC-rich alternative exons in CD44 transcripts. In myoblasts and epithelial cells, cooperates with HNRNPH1 to control the splicing of specific subsets of exons. In addition to binding mature mRNAs, also interacts with certain pri-microRNAs, including MIR132/miR-132, and stabilizes the primary transcript. Also participates in the MIR132 processing, resulting in significantly higher levels of mature MIR132 than MIR212 despite the fact that both are cotranscribed and co-regulated. Binding of pri-microRNAs may occur on the 3' segment flanking the stem loop via the 5'-[ACG]CAUC[ACU]-3' consensus sequence. Participates in MYC down-regulation at high cell density through the production of MYC-targeting microRNAs. Along with DDX5, may be involved in the processing of the 32S intermediate into the mature 28S rRNA. Promoter-specific transcription regulator, functioning as a coactivator or corepressor depending on the context of the promoter and the transcriptional complex in which it exists. Enhances NFAT5 transcriptional activity. Synergizes with TP53 in the activation of the MDM2 promoter; this activity requires acetylation on lysine residues. May also coactivate MDM2 transcription through a TP53-independent pathway. Coactivates MMP7 transcription. Along with CTNNB1, coactivates MYC, JUN, FOSL1 and cyclin D1/CCND1 transcription. Alone or in combination with DDX5 and/or SRA1 non-coding RNA, plays a critical role in promoting the assembly of proteins required for the formation of the transcription initiation complex and chromatin remodeling leading to coactivation of MYOD1-dependent transcription. This helicase-independent activity is required for skeletal muscle cells to properly differentiate into myotubes. During epithelial-to-mesenchymal transition, coregulates SMAD-dependent transcriptional activity, directly controlling key effectors of differentiation, including miRNAs which in turn directly repress its expression. Plays a role in estrogen and testosterone signaling pathway at several levels. Mediates the use of alternative promoters in estrogen-responsive genes and regulates transcription and splicing of a large number of steroid hormone target genes. Contrary to the splicing regulation activity, transcriptional coregulation of the estrogen receptor ESR1 is helicase activity-independent. Plays a role in innate immunity. Specifically restricts bunyavirus infection, including Rift Valley fever virus (RVFV) or La Crosse virus (LACV), but not vesicular stomatitis virus (VSV), in an interferon- and DROSHA-independent manner. Binds to RVFV RNA, likely via structured viral RNA elements. Promotes mRNA degradation mediated by the antiviral zinc-finger protein ZC3HAV1, in an ATPase-dependent manner. This Mus musculus (Mouse) protein is Probable ATP-dependent RNA helicase DDX17 (Ddx17).